Reading from the N-terminus, the 185-residue chain is MENTQENPTDQTTEETGREAQAAEPAAQAAENAAPAAEAALAEAQAKIAELQESFLRAKAETENVRRRAQDDVAKAHKFAIEGFAENLLPVLDSLEAAVGDTSGDLAKVREGVELTLRQLTSALEKGRVAALNPVGEKFDPHLHQAISMVPADQEPNTVVAVLQKGYTIADRVLRPALVTVAQPK.

Over residues Met1–Gln11 the composition is skewed to polar residues. Positions Met1–Glu38 are disordered. Over residues Glu19–Glu38 the composition is skewed to low complexity.

It belongs to the GrpE family. In terms of assembly, homodimer.

It is found in the cytoplasm. In terms of biological role, participates actively in the response to hyperosmotic and heat shock by preventing the aggregation of stress-denatured proteins, in association with DnaK and GrpE. It is the nucleotide exchange factor for DnaK and may function as a thermosensor. Unfolded proteins bind initially to DnaJ; upon interaction with the DnaJ-bound protein, DnaK hydrolyzes its bound ATP, resulting in the formation of a stable complex. GrpE releases ADP from DnaK; ATP binding to DnaK triggers the release of the substrate protein, thus completing the reaction cycle. Several rounds of ATP-dependent interactions between DnaJ, DnaK and GrpE are required for fully efficient folding. The chain is Protein GrpE from Burkholderia mallei (strain NCTC 10247).